The primary structure comprises 237 residues: Pre-protein VI (237 aa).

Residues 1–32 (MDDPFSTLAPRRGTQPLLSNWATIGISELHGG) constitute a propeptide that is removed on maturation. The amphipathic alpha-helix essential for membrane lytic activity stretch occupies residues 33–57 (ALGWGSWWSNLSRLGSSFGSNLKNL). The interval 35–56 (GWGSWWSNLSRLGSSFGSNLKN) is involved in endosomal membrane lysis. Residues 51–77 (GSNLKNLGLKAWNSSTGQALRQHLKDT) are interaction with hexon protein. Residues 70-79 (LRQHLKDTNL) carry the Nuclear export signal motif. Thr-146 bears the Phosphothreonine; by host mark. The Nuclear export signal motif lies at 218–229 (GTLDSIMGLGLQ). The segment at 220–226 (LDSIMGL) is interaction with hexon protein. A binds to importin alpha/beta, involved in hexon nuclear import region spans residues 227–237 (GLQPIKRRRCF). The Nuclear localization signal motif lies at 232 to 235 (KRRR).

The protein belongs to the adenoviridae protein VI family. In terms of assembly, interacts with hexon protein; this interaction allows nuclear import of hexon trimers and possibly pre-capsid assembly. Interacts (via C-terminal NLS) with importin alpha/beta. Interacts (via PPxY motif) with host NEDD4 ubiquitine ligase; this interaction might play a role in virus intracellular transport during entry. Part of a complex composed of the core-capsid bridging protein, the endosome lysis protein VI and the hexon-linking protein VIII; these interactions bridge the virus core to the capsid. Interacts with peripentonal hexons; this interaction stabilizes the capsid by gluing two peripentonal hexons together and joining them with an adjacent group-of-nine hexon. As to quaternary structure, heterodimer with the viral protease; disulfide-linked. Interacts with the viral protease. Post-translationally, ubiquitinated by Nedd4 following partial capsid disassembly; which might play a role in intracellular virus movement during entry. In terms of processing, contains the major nuclear import and export signals. Proteolytically removed during virion maturation. The processing of the C-terminus turns the precursor into a mature viral structural protein and abrogates its ability to promote hexon import and act as a potential chaperone protein.

The protein resides in the host nucleus. The protein localises to the host cytoplasm. Its subcellular location is the virion. Functionally, during virus assembly, promotes hexon trimers nuclear import through nuclear pore complexes via an importin alpha/beta-dependent mechanism. By analogy to herpesviruses capsid assembly, might act as a chaperone to promote the formation of the icosahedral capsid. In terms of biological role, structural component of the virion that provides increased stability to the particle shell through its interaction with the core-capsid bridging protein and the hexon-linking protein VIII. Fibers shedding during virus entry into host cell allows the endosome lysis protein to be exposed as a membrane-lytic peptide. Exhibits pH-independent membrane fragmentation activity and probably mediates viral rapid escape from host endosome via organellar membrane lysis. It is not clear if it then remains partially associated with the capsid and involved in the intracellular microtubule-dependent transport of capsid to the nucleus, or if it is lost during endosomal penetration. Its function is as follows. Cofactor that activates the viral protease. Binds to viral protease in a 1:1 ratio. The polypeptide is Pre-protein VI (Mus musculus (Mouse)).